Here is a 613-residue protein sequence, read N- to C-terminus: AP-5 complex subunit mu (613 aa).

One can recognise an MHD domain in the interval 309-563; sequence KQRLLFTIHE…DYAKVSFKIV (255 aa). The interval 501-522 is disordered; sequence SPLQSRRKGDGDDEESEDESAE. The segment covering 511-521 has biased composition (acidic residues); that stretch reads GDDEESEDESA.

The protein belongs to the adaptor complexes medium subunit family. Probably part of the adaptor protein complex 5 (AP-5).

It localises to the cytoplasmic vesicle membrane. This Arabidopsis thaliana (Mouse-ear cress) protein is AP-5 complex subunit mu (AP5M).